Here is a 243-residue protein sequence, read N- to C-terminus: MKNIRFDVEYDGTDFCGWQRQPGGIQTLQGELEAQLGRILQENISLTAAGRTDKGVHARLQVVNFMTGSAMELSKMAHALNSLLPDTVRVSNPHVVPLDFHARFSAKEREYRYFLLEEPSALRCRFTGCSKGSLHIGVMQDAAGLLVGEHDFLLLSKEPADKKNPVCLIKECEWQEENGVFVFRIRANRFLRSMVRYLVGVMIAVGRGRAVPEDLGMLLDDGLMTFPLFPAEPNGLFLWDVSY.

Asp-53 serves as the catalytic Nucleophile. A substrate-binding site is contributed by Tyr-111.

This sequence belongs to the tRNA pseudouridine synthase TruA family. As to quaternary structure, homodimer.

It carries out the reaction uridine(38/39/40) in tRNA = pseudouridine(38/39/40) in tRNA. Functionally, formation of pseudouridine at positions 38, 39 and 40 in the anticodon stem and loop of transfer RNAs. This chain is tRNA pseudouridine synthase A, found in Chlorobium limicola (strain DSM 245 / NBRC 103803 / 6330).